The primary structure comprises 516 residues: Delta(24)-sterol reductase (516 aa).

Positions 1 to 22 are cleaved as a signal peptide; the sequence is MEPAVSLAVCALLFLLWVRVKG. Topologically, residues 23–31 are lumenal; sequence LEFVLIHQR. Residues 32 to 52 traverse the membrane as a helical segment; sequence WVFVCLFLLPLSLIFDIYYYV. At 53–516 the chain is on the cytoplasmic side; that stretch reads RAWVVFKLSS…YDKICKAARH (464 aa). In terms of domain architecture, FAD-binding PCMH-type spans 58–234; that stretch reads FKLSSAPRLH…VAAEIRIIPA (177 aa). Residue 163–175 coordinates FAD; it reads TVGGLIMGTGIES.

It belongs to the FAD-binding oxidoreductase/transferase type 4 family. As to quaternary structure, interacts with DHCR7; this interaction regulates DHCR7 activity. It depends on FAD as a cofactor.

The protein resides in the endoplasmic reticulum membrane. It is found in the golgi apparatus membrane. It catalyses the reaction cholesterol + NADP(+) = desmosterol + NADPH + H(+). It carries out the reaction lanosterol + NADPH + H(+) = 24,25-dihydrolanosterol + NADP(+). The enzyme catalyses 5alpha-cholest-8-en-3beta-ol + NADP(+) = zymosterol + NADPH + H(+). The protein operates within steroid biosynthesis; cholesterol biosynthesis. In terms of biological role, catalyzes the reduction of the delta-24 double bond of sterol intermediates during cholesterol biosynthesis. In addition to its cholesterol-synthesizing activity, can protect cells from oxidative stress by reducing caspase 3 activity during apoptosis induced by oxidative stress. Also protects against amyloid-beta peptide-induced apoptosis. The chain is Delta(24)-sterol reductase (DHCR24) from Macaca fascicularis (Crab-eating macaque).